The sequence spans 256 residues: Imidazole glycerol phosphate synthase subunit HisF (256 aa).

Catalysis depends on residues D12 and D131.

Belongs to the HisA/HisF family. As to quaternary structure, heterodimer of HisH and HisF.

The protein localises to the cytoplasm. It catalyses the reaction 5-[(5-phospho-1-deoxy-D-ribulos-1-ylimino)methylamino]-1-(5-phospho-beta-D-ribosyl)imidazole-4-carboxamide + L-glutamine = D-erythro-1-(imidazol-4-yl)glycerol 3-phosphate + 5-amino-1-(5-phospho-beta-D-ribosyl)imidazole-4-carboxamide + L-glutamate + H(+). It participates in amino-acid biosynthesis; L-histidine biosynthesis; L-histidine from 5-phospho-alpha-D-ribose 1-diphosphate: step 5/9. Functionally, IGPS catalyzes the conversion of PRFAR and glutamine to IGP, AICAR and glutamate. The HisF subunit catalyzes the cyclization activity that produces IGP and AICAR from PRFAR using the ammonia provided by the HisH subunit. This Pseudomonas fluorescens (strain Pf0-1) protein is Imidazole glycerol phosphate synthase subunit HisF.